Consider the following 575-residue polypeptide: uncharacterized protein (575 aa).

The next 6 membrane-spanning stretches (helical) occupy residues 16–36 (FFLD…FPLI), 50–70 (WGLI…SSAL), 132–152 (PEDL…MLFI), 154–174 (WQLA…ALYF), 243–263 (ISYM…TWFV), and 264–284 (IRGS…NVLF). The ABC transmembrane type-1 domain maps to 16–299 (FFLDFFSAIA…INAIIEMYPR (284 aa)). The ABC transporter domain maps to 333–567 (IRYKHVSFGY…GGLYSRLHQA (235 aa)). Residue 366-373 (GPSGAGKS) participates in ATP binding.

Belongs to the ABC transporter superfamily.

It is found in the cell membrane. The protein localises to the membrane raft. This is an uncharacterized protein from Bacillus subtilis (strain 168).